The following is a 422-amino-acid chain: MDDGEAARRHRHRAISGGLTALAVRLADRLGAASPGRNLAFSPLSVHAALSLAAAGAAGGTLDEILAVLGAASRDDLAAFVGRTAETALADRGPESLGPRVVFAPGVWCDAARPFKPAYRAAVAAEYNAEATVVDFKNKVEEARKQINAWARRATGKLITDVLPPRSVGPETAVVLGNAIYFKGKWDRPFNESDTERKPFYRHDGAAAAAAVADVPYMSSRSYQRVAVHDGFKVLKLRYRSPRLLRDKRKRGGGGDVGGEFTRYAMAIFLPDARDGLRGLVERMASRPGFLHEHMPAAWPVPVGEFRVPKFKVSCGGSVVGALEQLGLRLPFSPELADLSDMVEDDGSGWPLFVGDIQHKAVIEVNEEGTVAAAATMTRMLPSGVPPPPVDFVAEHPFAYFIVEEMSSAVVFAGHIVDPSME.

The RCL stretch occupies residues 369 to 393 (GTVAAAATMTRMLPSGVPPPPVDFV).

Belongs to the serpin family.

In terms of biological role, probable serine protease inhibitor. The sequence is that of Putative serpin-Z8 from Oryza sativa subsp. japonica (Rice).